Here is a 124-residue protein sequence, read N- to C-terminus: Max-like protein 1 (124 aa).

Over residues 1–10 (MSDMSDLEDD) the composition is skewed to acidic residues. A disordered region spans residues 1 to 44 (MSDMSDLEDDQTGHCGSGEHSGPFDPKRHAREQHNALERRRRDN). The segment at 29-42 (HAREQHNALERRRR) is basic motif. The region spanning 29-82 (HAREQHNALERRRRDNIKDMYTSLREVVPDANGERVQASRAVILKKAIESIEKG) is the bHLH domain. Basic and acidic residues predominate over residues 32 to 44 (EQHNALERRRRDN). Residues 43–82 (DNIKDMYTSLREVVPDANGERVQASRAVILKKAIESIEKG) form a helix-loop-helix motif region. Residues 86 to 113 (SATLSVDVAEQESKNAKLREEIARLKAK) are a coiled coil.

Belongs to the MAX family. In terms of assembly, heterodimer with mdl-1 in presence and absence of DNA. Interacts with tdpt-1; the interaction promotes axon regeneration after injury. Expressed in D-type motor neurons.

The protein localises to the nucleus. Its function is as follows. Transcriptional regulator which binds to the E box motif 5'-CACGTG-3', when in a heterodimeric complex with mdl-1. Involved in the control of lifespan in response to dietary restriction, the decline in protein homeostasis associated with normal aging and may overlap with the insulin-like signaling pathway. Involved in promoting infection by the microsporidian pathogen N.parisii. Required for the expression of svh-2 and the promotion of axon regeneration after injury. The sequence is that of Max-like protein 1 from Caenorhabditis elegans.